The primary structure comprises 277 residues: Glutamate racemase (277 aa).

Residues 13 to 14 (DS) and 45 to 46 (YG) contribute to the substrate site. Cys77 (proton donor/acceptor) is an active-site residue. A substrate-binding site is contributed by 78–79 (NT). Residue Cys192 is the Proton donor/acceptor of the active site. Residue 193–194 (TH) participates in substrate binding.

This sequence belongs to the aspartate/glutamate racemases family.

The enzyme catalyses L-glutamate = D-glutamate. Its pathway is cell wall biogenesis; peptidoglycan biosynthesis. In terms of biological role, provides the (R)-glutamate required for cell wall biosynthesis. This is Glutamate racemase from Rhizobium meliloti (strain 1021) (Ensifer meliloti).